A 921-amino-acid polypeptide reads, in one-letter code: Inter-alpha-trypsin inhibitor heavy chain H4 (921 aa).

Residues 1–27 form the signal peptide; that stretch reads MKTLSPTGYGLLLVLPLLLAVLQSTTA. One can recognise a VIT domain in the interval 28–146; the sequence is HKNDINIYSL…KVTFELVYEE (119 aa). Residues asparagine 80, asparagine 205, and asparagine 242 are each glycosylated (N-linked (GlcNAc...) asparagine). The region spanning 270–428 is the VWFA domain; the sequence is PKNVIFVIDT…YAFLEKMALE (159 aa). N-linked (GlcNAc...) asparagine glycans are attached at residues asparagine 513 and asparagine 577. Residues 591-646 are disordered; the sequence is KPEGQEQSQVAEKPVENGNRQGNTHSGHSSFQFHSVGDRTSRLTGGSSVDPVFSHR. Polar residues predominate over residues 608 to 623; the sequence is GNRQGNTHSGHSSFQF. Residue threonine 712 is glycosylated (O-linked (GalNAc...) threonine). A disulfide bridge links cysteine 738 with cysteine 916.

This sequence belongs to the ITIH family. Interacts (via C-terminus) with DNAJC1 (via SANT 2 domain). In terms of processing, appears to be both N- and O-glycosylated. Cleaved by plasma kallikrein to yield 55- and 25-kDa fragments. In terms of tissue distribution, liver specific.

Its subcellular location is the secreted. Functionally, type II acute-phase protein (APP) involved in inflammatory responses to trauma. May also play a role in liver development or regeneration. This Sus scrofa (Pig) protein is Inter-alpha-trypsin inhibitor heavy chain H4 (ITIH4).